The sequence spans 405 residues: Cysteine desulfurase IscS (405 aa).

Residues 75–76, asparagine 156, glutamine 184, and 204–206 contribute to the pyridoxal 5'-phosphate site; these read AT and SAH. At lysine 207 the chain carries N6-(pyridoxal phosphate)lysine. Threonine 244 is a binding site for pyridoxal 5'-phosphate. Cysteine 329 functions as the Cysteine persulfide intermediate in the catalytic mechanism. Cysteine 329 lines the [2Fe-2S] cluster pocket.

This sequence belongs to the class-V pyridoxal-phosphate-dependent aminotransferase family. NifS/IscS subfamily. Homodimer. Forms a heterotetramer with IscU, interacts with other sulfur acceptors. It depends on pyridoxal 5'-phosphate as a cofactor.

It is found in the cytoplasm. The enzyme catalyses (sulfur carrier)-H + L-cysteine = (sulfur carrier)-SH + L-alanine. The protein operates within cofactor biosynthesis; iron-sulfur cluster biosynthesis. Master enzyme that delivers sulfur to a number of partners involved in Fe-S cluster assembly, tRNA modification or cofactor biosynthesis. Catalyzes the removal of elemental sulfur atoms from cysteine to produce alanine. Functions as a sulfur delivery protein for Fe-S cluster synthesis onto IscU, an Fe-S scaffold assembly protein, as well as other S acceptor proteins. This Acinetobacter baumannii (strain AB307-0294) protein is Cysteine desulfurase IscS.